The chain runs to 386 residues: Magnesium transporter MRS2-7 (386 aa).

A run of 2 helical transmembrane segments spans residues Leu-321 to Gly-341 and Ile-355 to Leu-375. The Required for magnesium transport activity motif lies at Gly-341 to Asn-343.

It belongs to the CorA metal ion transporter (MIT) (TC 1.A.35.5) family. As to expression, isoform 1 is expressed in the whole plant. Isoform 4 is expressed only in roots and flowers.

Its subcellular location is the endoplasmic reticulum membrane. Functionally, low-affinity magnesium transporter that mediates the influx of magnesium. This is Magnesium transporter MRS2-7 (MRS2-7) from Arabidopsis thaliana (Mouse-ear cress).